The sequence spans 942 residues: Isoleucine--tRNA ligase (942 aa).

The 'HIGH' region signature appears at 58-68 (PYANGDIHIGH). Glu566 serves as a coordination point for L-isoleucyl-5'-AMP. The 'KMSKS' region motif lies at 607–611 (KMSKS). Lys610 is an ATP binding site. 4 residues coordinate Zn(2+): Cys905, Cys908, Cys925, and Cys928.

Belongs to the class-I aminoacyl-tRNA synthetase family. IleS type 1 subfamily. Monomer. It depends on Zn(2+) as a cofactor.

The protein localises to the cytoplasm. It catalyses the reaction tRNA(Ile) + L-isoleucine + ATP = L-isoleucyl-tRNA(Ile) + AMP + diphosphate. Its function is as follows. Catalyzes the attachment of isoleucine to tRNA(Ile). As IleRS can inadvertently accommodate and process structurally similar amino acids such as valine, to avoid such errors it has two additional distinct tRNA(Ile)-dependent editing activities. One activity is designated as 'pretransfer' editing and involves the hydrolysis of activated Val-AMP. The other activity is designated 'posttransfer' editing and involves deacylation of mischarged Val-tRNA(Ile). In Vibrio parahaemolyticus serotype O3:K6 (strain RIMD 2210633), this protein is Isoleucine--tRNA ligase.